A 394-amino-acid polypeptide reads, in one-letter code: MPAPLFLSGPCEICGQKTSGRHFGVLSCRSCAAFFRRSATWSRKKVQCVKGTCKIFEDGKFNCKQCRLKKCVEVGMDSKKFQTNRDLISSCSVPQSLCNFLGRPEFILCCEPDKASVFKTTIDVTYLVDMAKNLLEKDPCQCPLSNSLEQLSTTLENMRGMKLNKETQIIKKLGKNESLKTWEQGFLRAVEWFSNFSEFRELDENLKMEILKTCWVSWIRLDKLSETANKRVNATLDNSLLMVGNDSCMHMNDYEVDLSWCTNYSLEQLAFFFLTPDDEKNYRQLIQDMVDLNPSSTEISYMLLQLSLEHAGKRLQGDILEATESLVQAQANQLHDYYAKKLKLSNYSSRLTQLMKITRTLEADMRLRIEKKKVADVFNIFKIQFSHPEMFETT.

Positions 8–83 form a DNA-binding region, nuclear receptor; the sequence is SGPCEICGQK…VGMDSKKFQT (76 aa). The NR C4-type zinc finger occupies 11–31; that stretch reads CEICGQKTSGRHFGVLSCRSC. The NR C4-type; degenerate zinc-finger motif lies at 47–66; the sequence is QCVKGTCKIFEDGKFNCKQC. The NR LBD domain maps to 126–394; the sequence is YLVDMAKNLL…FSHPEMFETT (269 aa).

Belongs to the nuclear hormone receptor family.

It is found in the nucleus. Orphan nuclear receptor. This Caenorhabditis elegans protein is Nuclear hormone receptor family member nhr-103 (nhr-103).